Here is a 619-residue protein sequence, read N- to C-terminus: Very-long-chain aldehyde decarbonylase GL1-4 (619 aa).

Helical transmembrane passes span 45–65 (IAFSLILPSLLLRMIHNQIWI), 94–114 (GWDDQILFNGLVFYAGYLAMP), 126–146 (GAVVTALVHTGPVEFLYYWFH), 178–198 (FAEHVVYFILFAIPILSTIYL), and 325–345 (AWYMWTLWPLAWLSMVLAWIY). One can recognise a Fatty acid hydroxylase domain in the interval 138-272 (VEFLYYWFHR…MPFYDYIYNT (135 aa)).

Belongs to the sterol desaturase family. Homodimer.

It localises to the endoplasmic reticulum membrane. The catalysed reaction is a long-chain fatty aldehyde + 2 NADPH + O2 + H(+) = a long-chain alkane + formate + 2 NADP(+) + H2O. In terms of biological role, aldehyde decarbonylase involved in the conversion of aldehydes to alkanes. Core component of a very-long-chain alkane synthesis complex. The sequence is that of Very-long-chain aldehyde decarbonylase GL1-4 from Oryza sativa subsp. indica (Rice).